Consider the following 492-residue polypeptide: Beta-glucosidase 38 (492 aa).

The first 21 residues, 1–21 (MNMPLLLLIAIVVVSLSHGNG), serve as a signal peptide directing secretion. Gln-45 is an a beta-D-glucoside binding site. N-linked (GlcNAc...) asparagine glycosylation is found at Asn-73 and Asn-77. A beta-D-glucoside is bound by residues His-146 and 191 to 192 (NE). The active-site Proton donor is Glu-192. A disulfide bridge connects residues Cys-211 and Cys-214. A glycan (N-linked (GlcNAc...) asparagine) is linked at Asn-310. An a beta-D-glucoside-binding site is contributed by Tyr-331. N-linked (GlcNAc...) asparagine glycosylation occurs at Asn-341. Residue Glu-400 participates in a beta-D-glucoside binding. Glu-400 functions as the Nucleophile in the catalytic mechanism. N-linked (GlcNAc...) asparagine glycosylation occurs at Asn-408. Residues Trp-447, 454–455 (EW), and Phe-463 contribute to the a beta-D-glucoside site.

Belongs to the glycosyl hydrolase 1 family.

It carries out the reaction Hydrolysis of terminal, non-reducing beta-D-glucosyl residues with release of beta-D-glucose.. The sequence is that of Beta-glucosidase 38 (BGLU38) from Oryza sativa subsp. japonica (Rice).